A 712-amino-acid polypeptide reads, in one-letter code: Polyribonucleotide nucleotidyltransferase (712 aa).

Residues D493 and D499 each coordinate Mg(2+). One can recognise a KH domain in the interval 560–619 (PRLLTFKVDPEDIGKIIGPGGKTVRGITEATGAKVDISDDGTITVSSSVGGQAEAARAMI). The S1 motif domain maps to 629–697 (GQVYLGKVTR…HKGRINLTRL (69 aa)).

Belongs to the polyribonucleotide nucleotidyltransferase family. Requires Mg(2+) as cofactor.

The protein localises to the cytoplasm. It carries out the reaction RNA(n+1) + phosphate = RNA(n) + a ribonucleoside 5'-diphosphate. Involved in mRNA degradation. Catalyzes the phosphorolysis of single-stranded polyribonucleotides processively in the 3'- to 5'-direction. The protein is Polyribonucleotide nucleotidyltransferase of Synechococcus sp. (strain JA-2-3B'a(2-13)) (Cyanobacteria bacterium Yellowstone B-Prime).